The chain runs to 455 residues: Lysine histidine transporter-like 4 (455 aa).

Over 1–38 (MAGIPDHIQDQHLVEEDQPFDLEDWLPITASRNANWYY) the chain is Cytoplasmic. A helical membrane pass occupies residues 39–59 (SAFHNVTAIVGAGVLGLPYAM). Topologically, residues 60 to 61 (SE) are extracellular. Residues 62–82 (LGWGPGVVVLILSWVITLYTL) traverse the membrane as a helical segment. At 83-113 (WQMIEMHEMFEGQRFDRYHELGQAAFGKKLG) the chain is on the cytoplasmic side. A helical transmembrane segment spans residues 114-134 (LYIIVPLQLLVEISVCIVYMV). Topologically, residues 135-158 (TGGKSLKNVHDLALGDGDKCTKLR) are extracellular. Residues 159-179 (IQHFILIFASSQFVLSLLKNF) form a helical membrane-spanning segment. Over 180–181 (NS) the chain is Cytoplasmic. The chain crosses the membrane as a helical span at residues 182 to 202 (ISGVSLVAAVMSVSYSTIAWV). Over 203–226 (ASLRKGATTGSVEYGYRKRTTSVP) the chain is Extracellular. The chain crosses the membrane as a helical span at residues 227–247 (LAFLSALGEMAFAYAGHNVVL). The Cytoplasmic segment spans residues 248–267 (EIQATIPSTPENPSKRPMWK). The chain crosses the membrane as a helical span at residues 268–288 (GAVVAYIIVAFCYFPVALVGF). Residues 289–307 (KTFGNSVEESILESLTKPT) are Extracellular-facing. Residues 308-328 (ALVIVANMFVVIHLLGSYQVY) traverse the membrane as a helical segment. Topologically, residues 329-357 (AMPVFDMIESVMIRIWHFSPTRVLRFTIR) are cytoplasmic. The chain crosses the membrane as a helical span at residues 358–378 (WTFVAATMGIAVGLPYYSALL). Position 379 (Ser379) is a topological domain, extracellular. A helical transmembrane segment spans residues 380 to 400 (FFGGFVFAPTTYFIPCIMWLI). The Cytoplasmic segment spans residues 401–412 (LKKPKRFSLSWC). A helical membrane pass occupies residues 413-433 (MNWFCIIFGLVLMIIAPIGGL). At 434–455 (AKLIYNIQKGTLPNSRCNLPKH) the chain is on the extracellular side.

Belongs to the amino acid/polyamine transporter 2 family. Amino acid/auxin permease (AAAP) (TC 2.A.18.2) subfamily.

It is found in the cell membrane. Functionally, amino acid transporter. The protein is Lysine histidine transporter-like 4 of Arabidopsis thaliana (Mouse-ear cress).